Here is a 539-residue protein sequence, read N- to C-terminus: CTP synthase (539 aa).

Residues 1–268 (MSFKSIFLTG…SDFLLNKLGF (268 aa)) form an amidoligase domain region. Ser-14 is a binding site for CTP. Ser-14 is a binding site for UTP. Residue 15-20 (SLGKGL) participates in ATP binding. Tyr-55 is an L-glutamine binding site. Asp-72 is a binding site for ATP. Residues Asp-72 and Glu-142 each contribute to the Mg(2+) site. Residues 149 to 151 (DIE), 188 to 193 (KTKPTQ), and Lys-224 contribute to the CTP site. Residues 188–193 (KTKPTQ) and Lys-224 contribute to the UTP site. Residues 294 to 532 (RIGLVGKYLE…IRAAKAYSLE (239 aa)) form the Glutamine amidotransferase type-1 domain. Gly-353 provides a ligand contact to L-glutamine. Cys-380 (nucleophile; for glutamine hydrolysis) is an active-site residue. L-glutamine is bound by residues 381-384 (LGMQ), Glu-404, and Arg-460. Residues His-505 and Glu-507 contribute to the active site.

The protein belongs to the CTP synthase family. As to quaternary structure, homotetramer.

The catalysed reaction is UTP + L-glutamine + ATP + H2O = CTP + L-glutamate + ADP + phosphate + 2 H(+). The enzyme catalyses L-glutamine + H2O = L-glutamate + NH4(+). It catalyses the reaction UTP + NH4(+) + ATP = CTP + ADP + phosphate + 2 H(+). It functions in the pathway pyrimidine metabolism; CTP biosynthesis via de novo pathway; CTP from UDP: step 2/2. Allosterically activated by GTP, when glutamine is the substrate; GTP has no effect on the reaction when ammonia is the substrate. The allosteric effector GTP functions by stabilizing the protein conformation that binds the tetrahedral intermediate(s) formed during glutamine hydrolysis. Inhibited by the product CTP, via allosteric rather than competitive inhibition. Its function is as follows. Catalyzes the ATP-dependent amination of UTP to CTP with either L-glutamine or ammonia as the source of nitrogen. Regulates intracellular CTP levels through interactions with the four ribonucleotide triphosphates. This is CTP synthase from Chlamydia trachomatis serovar L2 (strain ATCC VR-902B / DSM 19102 / 434/Bu).